The chain runs to 127 residues: Profilin (127 aa).

This sequence belongs to the profilin family. In terms of assembly, occurs in many kinds of cells as a complex with monomeric actin in a 1:1 ratio.

The protein localises to the cytoplasm. It localises to the cytoskeleton. Its function is as follows. Binds to actin and affects the structure of the cytoskeleton. At high concentrations, profilin prevents the polymerization of actin, whereas it enhances it at low concentrations. By binding to PIP2, it inhibits the formation of IP3 and DG. In S.pombe, it is essential for cytokinesis. This chain is Profilin (cdc3), found in Schizosaccharomyces pombe (strain 972 / ATCC 24843) (Fission yeast).